Reading from the N-terminus, the 337-residue chain is Ketol-acid reductoisomerase (NADP(+)) (337 aa).

The region spanning 1–180 (MQVYYDKDAD…GGTKGGVIET (180 aa)) is the KARI N-terminal Rossmann domain. Residues 24–27 (YGSQ), arginine 47, and serine 51 each bind NADP(+). Histidine 106 is a catalytic residue. NADP(+) is bound at residue glycine 132. The 146-residue stretch at 181–326 (TFREETETDL…ARLRAMMPWI (146 aa)) folds into the KARI C-terminal knotted domain. Mg(2+) contacts are provided by aspartate 189, glutamate 193, glutamate 225, and glutamate 229. Serine 250 is a substrate binding site.

It belongs to the ketol-acid reductoisomerase family. Requires Mg(2+) as cofactor.

The enzyme catalyses (2R)-2,3-dihydroxy-3-methylbutanoate + NADP(+) = (2S)-2-acetolactate + NADPH + H(+). It carries out the reaction (2R,3R)-2,3-dihydroxy-3-methylpentanoate + NADP(+) = (S)-2-ethyl-2-hydroxy-3-oxobutanoate + NADPH + H(+). Its pathway is amino-acid biosynthesis; L-isoleucine biosynthesis; L-isoleucine from 2-oxobutanoate: step 2/4. The protein operates within amino-acid biosynthesis; L-valine biosynthesis; L-valine from pyruvate: step 2/4. Its function is as follows. Involved in the biosynthesis of branched-chain amino acids (BCAA). Catalyzes an alkyl-migration followed by a ketol-acid reduction of (S)-2-acetolactate (S2AL) to yield (R)-2,3-dihydroxy-isovalerate. In the isomerase reaction, S2AL is rearranged via a Mg-dependent methyl migration to produce 3-hydroxy-3-methyl-2-ketobutyrate (HMKB). In the reductase reaction, this 2-ketoacid undergoes a metal-dependent reduction by NADPH to yield (R)-2,3-dihydroxy-isovalerate. This chain is Ketol-acid reductoisomerase (NADP(+)), found in Neisseria gonorrhoeae (strain ATCC 700825 / FA 1090).